A 236-amino-acid chain; its full sequence is Phosphatidylserine decarboxylase proenzyme (236 aa).

Serine 194 acts as the Schiff-base intermediate with substrate; via pyruvic acid in catalysis. Position 194 is a pyruvic acid (Ser); by autocatalysis (serine 194).

Belongs to the phosphatidylserine decarboxylase family. PSD-A subfamily. In terms of assembly, heterodimer of a large membrane-associated beta subunit and a small pyruvoyl-containing alpha subunit. It depends on pyruvate as a cofactor. Post-translationally, is synthesized initially as an inactive proenzyme. Formation of the active enzyme involves a self-maturation process in which the active site pyruvoyl group is generated from an internal serine residue via an autocatalytic post-translational modification. Two non-identical subunits are generated from the proenzyme in this reaction, and the pyruvate is formed at the N-terminus of the alpha chain, which is derived from the carboxyl end of the proenzyme. The post-translation cleavage follows an unusual pathway, termed non-hydrolytic serinolysis, in which the side chain hydroxyl group of the serine supplies its oxygen atom to form the C-terminus of the beta chain, while the remainder of the serine residue undergoes an oxidative deamination to produce ammonia and the pyruvoyl prosthetic group on the alpha chain.

It is found in the cell membrane. The catalysed reaction is a 1,2-diacyl-sn-glycero-3-phospho-L-serine + H(+) = a 1,2-diacyl-sn-glycero-3-phosphoethanolamine + CO2. The protein operates within phospholipid metabolism; phosphatidylethanolamine biosynthesis; phosphatidylethanolamine from CDP-diacylglycerol: step 2/2. Catalyzes the formation of phosphatidylethanolamine (PtdEtn) from phosphatidylserine (PtdSer). This chain is Phosphatidylserine decarboxylase proenzyme, found in Rhodospirillum rubrum (strain ATCC 11170 / ATH 1.1.1 / DSM 467 / LMG 4362 / NCIMB 8255 / S1).